A 37-amino-acid chain; its full sequence is Toxin Bcg III 28.78 (37 aa).

Cysteines 6 and 31 form a disulfide.

It is found in the secreted. Its subcellular location is the nematocyst. The polypeptide is Toxin Bcg III 28.78 (Bunodosoma cangicum (Sea anemone)).